The chain runs to 382 residues: Galactokinase (382 aa).

34–37 (EHTD) lines the substrate pocket. Position 124-130 (124-130 (GAGLSSS)) interacts with ATP. Mg(2+)-binding residues include serine 130 and glutamate 162. The active-site Proton acceptor is aspartate 174. Tyrosine 223 lines the substrate pocket.

Belongs to the GHMP kinase family. GalK subfamily.

The protein localises to the cytoplasm. It catalyses the reaction alpha-D-galactose + ATP = alpha-D-galactose 1-phosphate + ADP + H(+). It functions in the pathway carbohydrate metabolism; galactose metabolism. Its function is as follows. Catalyzes the transfer of the gamma-phosphate of ATP to D-galactose to form alpha-D-galactose-1-phosphate (Gal-1-P). This Salmonella schwarzengrund (strain CVM19633) protein is Galactokinase.